Here is a 425-residue protein sequence, read N- to C-terminus: Secernin-2 (425 aa).

Cys-12 is a catalytic residue. At Thr-52 the chain carries Phosphothreonine.

The protein belongs to the peptidase C69 family. Secernin subfamily.

This Homo sapiens (Human) protein is Secernin-2 (SCRN2).